A 382-amino-acid chain; its full sequence is Anhydro-N-acetylmuramic acid kinase (382 aa).

15–22 (GTSLDGVD) is a binding site for ATP.

The protein belongs to the anhydro-N-acetylmuramic acid kinase family.

The catalysed reaction is 1,6-anhydro-N-acetyl-beta-muramate + ATP + H2O = N-acetyl-D-muramate 6-phosphate + ADP + H(+). It functions in the pathway amino-sugar metabolism; 1,6-anhydro-N-acetylmuramate degradation. Its pathway is cell wall biogenesis; peptidoglycan recycling. Its function is as follows. Catalyzes the specific phosphorylation of 1,6-anhydro-N-acetylmuramic acid (anhMurNAc) with the simultaneous cleavage of the 1,6-anhydro ring, generating MurNAc-6-P. Is required for the utilization of anhMurNAc either imported from the medium or derived from its own cell wall murein, and thus plays a role in cell wall recycling. The sequence is that of Anhydro-N-acetylmuramic acid kinase from Haemophilus influenzae (strain ATCC 51907 / DSM 11121 / KW20 / Rd).